We begin with the raw amino-acid sequence, 165 residues long: MKYTSYILAFQLCIVLGSLGCYCQDPYVKEAENLKKYFNAGDPDVADNGTLFLDILRNWKEESDRKIMQSQIVSFYFKLFKSFKDDQRIQKSVETIKEDINVKFFNSNKKKRDDFEKLTNYSVTDLNVQRKAVHELIQVMAELSPAAKIGKRKRSQTFRGRRASQ.

The N-terminal stretch at 1 to 23 (MKYTSYILAFQLCIVLGSLGCYC) is a signal peptide. Gln-24 carries the post-translational modification Pyrrolidone carboxylic acid. N-linked (GlcNAc...) asparagine glycosylation is found at Asn-48 and Asn-120.

The protein belongs to the type II (or gamma) interferon family. Homodimer. Interacts with IFNGR1 (via extracellular domain); this interaction promotes IFNGR1 dimerization. In terms of tissue distribution, released primarily from activated T lymphocytes.

Its subcellular location is the secreted. Functionally, type II interferon produced by immune cells such as T-cells and NK cells that plays crucial roles in antimicrobial, antiviral, and antitumor responses by activating effector immune cells and enhancing antigen presentation. Primarily signals through the JAK-STAT pathway after interaction with its receptor IFNGR1 to affect gene regulation. Upon IFNG binding, IFNGR1 intracellular domain opens out to allow association of downstream signaling components JAK2, JAK1 and STAT1, leading to STAT1 activation, nuclear translocation and transcription of IFNG-regulated genes. Many of the induced genes are transcription factors such as IRF1 that are able to further drive regulation of a next wave of transcription. Plays a role in class I antigen presentation pathway by inducing a replacement of catalytic proteasome subunits with immunoproteasome subunits. In turn, increases the quantity, quality, and repertoire of peptides for class I MHC loading. Increases the efficiency of peptide generation also by inducing the expression of activator PA28 that associates with the proteasome and alters its proteolytic cleavage preference. Up-regulates as well MHC II complexes on the cell surface by promoting expression of several key molecules such as cathepsins B/CTSB, H/CTSH, and L/CTSL. Participates in the regulation of hematopoietic stem cells during development and under homeostatic conditions by affecting their development, quiescence, and differentiation. The protein is Interferon gamma (IFNG) of Cercocebus atys (Sooty mangabey).